Reading from the N-terminus, the 281-residue chain is NAC domain-containing protein 6 (281 aa).

The NAC domain maps to 4 to 156; it reads LPVGSRFCPT…QDALTGFADQ (153 aa). Disordered regions lie at residues 84-109 and 211-249; these read GGSE…QKGD and LEGH…VTQE. Basic and acidic residues predominate over residues 94 to 109; that stretch reads NDGKKEIKDGHMQKGD. Residues 109-162 mediate DNA binding; the sequence is DGLRASDDLQKVVLCRIRYKKEANVNEFGLVNHQAHQTQDALTGFADQLEMMLE. Low complexity predominate over residues 229 to 239; the sequence is QQQQQQQQQQQ.

It is found in the nucleus. This chain is NAC domain-containing protein 6 (NAC006), found in Arabidopsis thaliana (Mouse-ear cress).